The sequence spans 329 residues: Ubiquitin carboxyl-terminal hydrolase isozyme L5 (329 aa).

In terms of domain architecture, UCH catalytic spans 7–225 (EWCLMESDPG…IRFNLMAIVS (219 aa)). Lys47 carries the N6-succinyllysine modification. Cys88 serves as the catalytic Nucleophile. Lys158 is modified (N6-acetyllysine). His164 functions as the Proton donor in the catalytic mechanism. Lys289 carries the N6-succinyllysine modification. The ULD domain maps to 291–319 (NYLPFIMELLKTLAEHQQLIPLVEKAKEK). The interaction with ADRM1 stretch occupies residues 313 to 329 (VEKAKEKQNAKKAQETK).

It belongs to the peptidase C12 family. In terms of assembly, component of the 19S (PA700) regulatory complex of the 26S proteasome. Interacts with ADRM1 and NFRKB. Component of the INO80 complex; specifically part of a complex module associated with N-terminus of INO80.

The protein localises to the cytoplasm. Its subcellular location is the nucleus. It catalyses the reaction Thiol-dependent hydrolysis of ester, thioester, amide, peptide and isopeptide bonds formed by the C-terminal Gly of ubiquitin (a 76-residue protein attached to proteins as an intracellular targeting signal).. Its activity is regulated as follows. Activated by ADRM1. Inhibited by interaction with NFRKB. Its function is as follows. Protease that specifically cleaves 'Lys-48'-linked polyubiquitin chains. Deubiquitinating enzyme associated with the 19S regulatory subunit of the 26S proteasome. Putative regulatory component of the INO80 complex; however is inactive in the INO80 complex and is activated by a transient interaction of the INO80 complex with the proteasome via ADRM1. This is Ubiquitin carboxyl-terminal hydrolase isozyme L5 (Uchl5) from Mus musculus (Mouse).